Reading from the N-terminus, the 193-residue chain is Probable chorismate pyruvate-lyase (193 aa).

Substrate-binding residues include Arg-81, Leu-119, and Glu-177.

The protein belongs to the UbiC family.

Its subcellular location is the cytoplasm. The enzyme catalyses chorismate = 4-hydroxybenzoate + pyruvate. It participates in cofactor biosynthesis; ubiquinone biosynthesis. Removes the pyruvyl group from chorismate, with concomitant aromatization of the ring, to provide 4-hydroxybenzoate (4HB) for the ubiquinone pathway. In Idiomarina loihiensis (strain ATCC BAA-735 / DSM 15497 / L2-TR), this protein is Probable chorismate pyruvate-lyase.